Here is a 244-residue protein sequence, read N- to C-terminus: Type III pantothenate kinase (244 aa).

7-14 provides a ligand contact to ATP; the sequence is DIGNTRLK. Substrate is bound by residues Y95 and 102 to 105; that span reads GIDR. The Proton acceptor role is filled by D104. T126 contributes to the ATP binding site. Residue T177 coordinates substrate.

It belongs to the type III pantothenate kinase family. As to quaternary structure, homodimer. The cofactor is NH4(+). Requires K(+) as cofactor.

It is found in the cytoplasm. It carries out the reaction (R)-pantothenate + ATP = (R)-4'-phosphopantothenate + ADP + H(+). The protein operates within cofactor biosynthesis; coenzyme A biosynthesis; CoA from (R)-pantothenate: step 1/5. In terms of biological role, catalyzes the phosphorylation of pantothenate (Pan), the first step in CoA biosynthesis. In Acinetobacter baumannii (strain AB307-0294), this protein is Type III pantothenate kinase.